The primary structure comprises 426 residues: C4-dicarboxylate transport protein (426 aa).

Helical transmembrane passes span 8 to 28 (VLYV…HFYP), 44 to 64 (LIKM…IAGM), 78 to 98 (LLYF…ATHV), 148 to 168 (GEIL…ATAG), 173 to 193 (VVTG…RIIT), 222 to 242 (LIGT…GIIA), 297 to 317 (GYSF…LFIA), and 355 to 375 (AATL…ILGI).

This sequence belongs to the dicarboxylate/amino acid:cation symporter (DAACS) (TC 2.A.23) family.

The protein localises to the cell inner membrane. Functionally, responsible for the transport of dicarboxylates such as succinate, fumarate, and malate from the periplasm across the membrane. This Paraburkholderia xenovorans (strain LB400) protein is C4-dicarboxylate transport protein.